The following is a 249-amino-acid chain: Thrombin-like enzyme barnettobin (249 aa).

An N-terminal signal peptide occupies residues 1-10 (APKELQVSYA). The propeptide occupies 11 to 16 (HKSSEL). The region spanning 17–240 (VIGGDECDIN…YPPWIQSIIA (224 aa)) is the Peptidase S1 domain. Cystine bridges form between cysteine 23-cysteine 154, cysteine 41-cysteine 57, cysteine 89-cysteine 247, cysteine 133-cysteine 201, cysteine 165-cysteine 180, and cysteine 191-cysteine 216. Active-site charge relay system residues include histidine 56 and aspartate 101. N-linked (GlcNAc...) asparagine glycans are attached at residues asparagine 145 and asparagine 161. Serine 195 functions as the Charge relay system in the catalytic mechanism. N-linked (GlcNAc...) asparagine glycosylation is present at asparagine 242.

Belongs to the peptidase S1 family. Snake venom subfamily. Monomer. Post-translationally, glycoprotein, contains approx. 52% carbohydrate which could be removed by N-glycosidase. Glycosylation is important, since deglycosylated barnettobin loses its clotting and defibrinogenating effects. In terms of tissue distribution, expressed by the venom gland.

The protein localises to the secreted. Its activity is regulated as follows. Both coagulant and amidolytic activities are inhibited by PMSF. Amidolytic activity is partially inhibited by DTT, chymostatin, SBTI and TLCK, but not by heparin and EDTA. Functionally, thrombin-like snake venom serine protease that releases only fibrinopeptide A from human Aalpha chain of fibrinogen (specific coagulant activity was 251.7 NIH thrombin units/mg). Also shows fibrino(geno)lytic activities in vitro and defibrinogenating effects in vivo. The protein is Thrombin-like enzyme barnettobin of Bothrops barnetti (Barnett's lancehead).